The sequence spans 380 residues: Cytochrome b (380 aa).

A run of 4 helical transmembrane segments spans residues 34 to 54, 78 to 99, 114 to 134, and 179 to 199; these read FGSLLGICLLTQILTGLLLAM, WLIRNLHANGASFFFICIYLHI, WNTGVILLLTLMATAFVGYVL, and FFALHFLLPFMITGLTTIHLT. Residues His-84 and His-98 each coordinate heme b. Heme b contacts are provided by His-183 and His-197. His-202 is a binding site for a ubiquinone. A run of 4 helical transmembrane segments spans residues 227 to 247, 289 to 309, 321 to 341, and 348 to 368; these read LKDFLGFTLMLLPLTTLALFS, LGGVLALAASVLILFLAPFLH, ISQLLFWILVTNLLILTWVGS, and FIIIGQLASITYFTILLILFP.

This sequence belongs to the cytochrome b family. As to quaternary structure, the cytochrome bc1 complex contains 11 subunits: 3 respiratory subunits (MT-CYB, CYC1 and UQCRFS1), 2 core proteins (UQCRC1 and UQCRC2) and 6 low-molecular weight proteins (UQCRH/QCR6, UQCRB/QCR7, UQCRQ/QCR8, UQCR10/QCR9, UQCR11/QCR10 and a cleavage product of UQCRFS1). This cytochrome bc1 complex then forms a dimer. The cofactor is heme b.

It is found in the mitochondrion inner membrane. In terms of biological role, component of the ubiquinol-cytochrome c reductase complex (complex III or cytochrome b-c1 complex) that is part of the mitochondrial respiratory chain. The b-c1 complex mediates electron transfer from ubiquinol to cytochrome c. Contributes to the generation of a proton gradient across the mitochondrial membrane that is then used for ATP synthesis. The protein is Cytochrome b (MT-CYB) of Pelecanoides urinatrix (Common diving petrel).